We begin with the raw amino-acid sequence, 362 residues long: MSIENLARTNVRDLTPYQSARRLGGNGDVWLNANEYPIAPEFQLTAQTFNRYPECQPALVIERYAEYAGVKKEQVLVSRGADEGIELLIRAFCEPGKDAILFCPPTYGMYAVSAETFGVERRTVAAKQDWQLDLPAIADSLDNVKLIYVCSPNNPTGNLIDANDLRSLLEMAKGKAIVAVDEAYIEFCPQASVAGWLNDYPHLAILRTLSKAFALAGLRCGFTLGNEDLIALLLKVIAPYPLSTPVADIAAQALSTEGIRIMRQRVTEIAANRSWLLQALQNCACVEQVFTSDSNYLLARFTASSNVFKTLWDQGIILRDQNKQPGLSGCLRITIGTREECQRVVDALSALPGATKTRQEPM.

At K211 the chain carries N6-(pyridoxal phosphate)lysine.

Belongs to the class-II pyridoxal-phosphate-dependent aminotransferase family. Histidinol-phosphate aminotransferase subfamily. Homodimer. It depends on pyridoxal 5'-phosphate as a cofactor.

It carries out the reaction L-histidinol phosphate + 2-oxoglutarate = 3-(imidazol-4-yl)-2-oxopropyl phosphate + L-glutamate. The protein operates within amino-acid biosynthesis; L-histidine biosynthesis; L-histidine from 5-phospho-alpha-D-ribose 1-diphosphate: step 7/9. The chain is Histidinol-phosphate aminotransferase from Serratia proteamaculans (strain 568).